The primary structure comprises 365 residues: Testis-specific serine/threonine-protein kinase 1 (365 aa).

Residues Tyr12–Val272 enclose the Protein kinase domain. ATP contacts are provided by residues Leu18–Val26 and Lys41. The Proton acceptor role is filled by Asp136. Residue Thr174 is modified to Phosphothreonine. Positions Gly282–Thr365 are disordered. A compositionally biased stretch (basic and acidic residues) spans Gly303–Glu330. The span at Asp331 to Glu347 shows a compositional bias: polar residues.

The protein belongs to the protein kinase superfamily. CAMK Ser/Thr protein kinase family. Interacts with TSSK2. Interacts with HSP90; this interaction stabilizes TSSK1. Requires Mg(2+) as cofactor. Post-translationally, autophosphorylated. In terms of processing, ubiquitinated; HSP90 activity negatively regulates ubiquitination and degradation. In terms of tissue distribution, testis-specific. Expressed only in postmeiotic spermatids at the final stages of cytodifferentiation in the seminiferous tubules (at protein level). Not detected in released sperms in the lumen of the seminiferous tubules and the epididymis.

The protein resides in the cytoplasm. It is found in the cytoplasmic vesicle. The protein localises to the secretory vesicle. Its subcellular location is the acrosome. It localises to the cell projection. The protein resides in the cilium. It is found in the flagellum. The catalysed reaction is L-seryl-[protein] + ATP = O-phospho-L-seryl-[protein] + ADP + H(+). It catalyses the reaction L-threonyl-[protein] + ATP = O-phospho-L-threonyl-[protein] + ADP + H(+). Its activity is regulated as follows. Activated by phosphorylation on Thr-174, potentially by autophosphorylation. Testis-specific serine/threonine-protein kinase required during spermatid development. Phosphorylates 'Ser-281' of TSKS. Involved in the late stages of spermatogenesis, during the reconstruction of the cytoplasm. During spermatogenesis, required for the transformation of a ring-shaped structure around the base of the flagellum originating from the chromatoid body. This Mus musculus (Mouse) protein is Testis-specific serine/threonine-protein kinase 1 (Tssk1b).